The following is a 272-amino-acid chain: Catechol O-methyltransferase (272 aa).

Residues 1 to 6 (MLEAPP) are Cytoplasmic-facing. Residues 7-27 (LLLVAGGVGLALLALRWLATT) form a helical; Signal-anchor for type II membrane protein membrane-spanning segment. The Extracellular portion of the chain corresponds to 28-272 (DLQFFGRAFI…YKGLSGPARP (245 aa)). Residues Val93, Glu115, Ser123, Glu141, 168–171 (GASQ), Ser170, and Asp192 contribute to the S-adenosyl-L-methionine site. Asp192 is a Mg(2+) binding site. A substrate-binding site is contributed by Lys195. Mg(2+)-binding residues include Asp220 and Asn221. Substrate is bound by residues Asn221 and Glu250. Ser267 carries the post-translational modification Phosphoserine.

This sequence belongs to the class I-like SAM-binding methyltransferase superfamily. Cation-dependent O-methyltransferase family. Mg(2+) is required as a cofactor.

The protein localises to the cytoplasm. It localises to the cell membrane. It carries out the reaction a catechol + S-adenosyl-L-methionine = a guaiacol + S-adenosyl-L-homocysteine + H(+). The catalysed reaction is 2-hydroxyestrone + S-adenosyl-L-methionine = 2-hydroxy-3-methoxy-estrone + S-adenosyl-L-homocysteine + H(+). The enzyme catalyses 4-hydroxyestrone + S-adenosyl-L-methionine = 4-methoxyestrone + S-adenosyl-L-homocysteine + H(+). It catalyses the reaction 2-hydroxyestrone + S-adenosyl-L-methionine = 2-methoxyestrone + S-adenosyl-L-homocysteine + H(+). It carries out the reaction 4-hydroxy-17beta-estradiol + S-adenosyl-L-methionine = 4-methoxy-17beta-estradiol + S-adenosyl-L-homocysteine + H(+). The catalysed reaction is 2-hydroxy-17beta-estradiol + S-adenosyl-L-methionine = 2-hydroxy-3-methoxy-17beta-estradiol + S-adenosyl-L-homocysteine + H(+). The enzyme catalyses 2-hydroxy-17beta-estradiol + S-adenosyl-L-methionine = 2-methoxy-17beta-estradiol + S-adenosyl-L-homocysteine + H(+). Catalyzes the O-methylation, and thereby the inactivation, of catecholamine neurotransmitters and catechol hormones. Also shortens the biological half-lives of certain neuroactive drugs, like L-DOPA, alpha-methyl DOPA and isoproterenol. The protein is Catechol O-methyltransferase (COMT) of Bos taurus (Bovine).